The chain runs to 324 residues: Elongation factor P--(R)-beta-lysine ligase (324 aa).

Substrate is bound at residue S75–E77. ATP is bound by residues R99–E101 and N108. Y117 is a substrate binding site. Position 243–244 (E243–L244) interacts with ATP. E250 lines the substrate pocket. G299 serves as a coordination point for ATP.

It belongs to the class-II aminoacyl-tRNA synthetase family. EpmA subfamily. In terms of assembly, homodimer.

It carries out the reaction D-beta-lysine + L-lysyl-[protein] + ATP = N(6)-((3R)-3,6-diaminohexanoyl)-L-lysyl-[protein] + AMP + diphosphate + H(+). Its function is as follows. With EpmB is involved in the beta-lysylation step of the post-translational modification of translation elongation factor P (EF-P). Catalyzes the ATP-dependent activation of (R)-beta-lysine produced by EpmB, forming a lysyl-adenylate, from which the beta-lysyl moiety is then transferred to the epsilon-amino group of a conserved specific lysine residue in EF-P. In Pseudoalteromonas translucida (strain TAC 125), this protein is Elongation factor P--(R)-beta-lysine ligase.